The chain runs to 279 residues: DegV domain-containing protein SA1258 (279 aa).

The DegV domain maps to 4–278 (QIIVTDSTSD…QGAIGLVVLK (275 aa)). Hexadecanoate-binding residues include T61 and S93.

Functionally, may bind long-chain fatty acids, such as palmitate, and may play a role in lipid transport or fatty acid metabolism. The polypeptide is DegV domain-containing protein SA1258 (Staphylococcus aureus (strain N315)).